Reading from the N-terminus, the 895-residue chain is Receptor-like protein kinase FERONIA (895 aa).

A signal peptide spans 1-27; sequence MKITEGRFRLSLLLLLLLISAATLISA. Over 28-447 the chain is Extracellular; the sequence is ADYSPTEKIL…TTRKSKSNTA (420 aa). N46, N124, N142, N171, N219, N269, N305, N330, N345, and N410 each carry an N-linked (GlcNAc...) asparagine glycan. The chain crosses the membrane as a helical span at residues 448–468; that stretch reads IIAGAASGAVVLALIIGFCVF. The Cytoplasmic portion of the chain corresponds to 469–895; sequence GAYRRRKRGD…FSQIMNPKGR (427 aa). The Protein kinase domain occupies 536 to 810; sequence FDESRVLGVG…GDVLWNLEFA (275 aa). Residues 542–550 and K565 contribute to the ATP site; that span reads LGVGGFGKV. Catalysis depends on D661, which acts as the Proton acceptor. Residues 844–895 form a disordered region; it reads NDKSSDVYEGNVTDSRSSGIDMSIGGRSLASEDSDGLTPSAVFSQIMNPKGR. 4 positions are modified to phosphoserine: S858, S866, S871, and S874. A compositionally biased stretch (polar residues) spans 884 to 895; sequence AVFSQIMNPKGR.

Belongs to the protein kinase superfamily. Ser/Thr protein kinase family. As to quaternary structure, interacts with ROPGEF1. Interacts with RALF1; triggering phosphorylation status and subsequent activation. Interacts with LRE and LLG1. Interacts, via its extracellular domain, with FERONIA at the synergid cell surface. In terms of processing, autophosphorylated. Post-translationally, phosphorylated at Ser-858, Ser-871 and Ser-874 upon activation by RALF1. As to expression, expressed in leaves, buds, flowers, siliques, young ovules primordia, and young anthers with immature pollen, but not detected in mature pollen. Highest expression in the synergid cells of the female gametophyte.

Its subcellular location is the cell membrane. It catalyses the reaction L-seryl-[protein] + ATP = O-phospho-L-seryl-[protein] + ADP + H(+). It carries out the reaction L-threonyl-[protein] + ATP = O-phospho-L-threonyl-[protein] + ADP + H(+). Receptor-like protein kinase that mediates the female control of male gamete delivery during fertilization, including growth cessation of compatible pollen tubes ensuring a reproductive isolation barriers, by regulating MLO7 subcellular polarization upon pollen tube perception in the female gametophyte synergids. Required for cell elongation during vegetative growth, mostly in a brassinosteroids- (BR-) independent manner. Acts as an upstream regulator for the Rac/Rop-signaling pathway that controls ROS-mediated root hair development. Seems to regulate a cross-talk between brassinosteroids and ethylene signaling pathways during hypocotyl elongation. Negative regulator of brassinosteroid response in light-grown hypocotyls, but required for brassinosteroid response in etiolated seedlings. Mediates sensitivity to powdery mildew (e.g. Golovinomyces orontii). Positive regulator of auxin-promoted growth that represses the abscisic acid (ABA) signaling via the activation of ABI2 phosphatase. Required for RALF1-mediated extracellular alkalinization in a signaling pathway preventing cell expansion. In Arabidopsis thaliana (Mouse-ear cress), this protein is Receptor-like protein kinase FERONIA.